The chain runs to 373 residues: MRSGFLRSARRLWARRAISRMPPPSEELLARGGPLRAFLERRVGSEAGGLDAGSPQLAAAARLLNEKERELRDTESLLHDENEDLKKLAESEIALCQKEIAELKHRIISLLVPSEDMDGSDLILEVTAGVGGQEAMLFTSEMFDMYQQYAAFKRWHFETLEYFPSELGGLRHASASIGGPEAYRHMKFEGGVHRVQRVPKTERQGRIHTSTMTVAILPQPTEIKLVINPKDLRIDTKRASGAGGQHVNTTDSAVRIVHLPTGIISECQQERSQLKNRELAMKKLRARLYSMRLEEETAKRYSARKIQVGTKGRSEKIRTYNFPQNRVTDHRINKSLHDLESFMQGDCLLDDLIQSLKDYSDYESLVEMISRKD.

The transit peptide at 1 to 13 (MRSGFLRSARRLW) directs the protein to the mitochondrion. A coiled-coil region spans residues 56–111 (QLAAAARLLNEKERELRDTESLLHDENEDLKKLAESEIALCQKEIAELKHRIISLL). Positions 229–293 (PKDLRIDTKR…LRARLYSMRL (65 aa)) are GGQ domain. A GGQ motif is present at residues 243-245 (GGQ). The residue at position 245 (Gln-245) is an N5-methylglutamine.

The protein belongs to the prokaryotic/mitochondrial release factor family. Methylation of glutamine in the GGQ triplet by HEMK1 is conserved from bacteria to mammals.

It is found in the mitochondrion. Mitochondrial peptide chain release factor that directs the termination of translation in response to the peptide chain termination codons UAA and UAG. The polypeptide is Peptide chain release factor 1-like, mitochondrial (Mtrf1l) (Rattus norvegicus (Rat)).